The primary structure comprises 494 residues: Glycerol kinase (494 aa).

Position 12 (Thr-12) interacts with ADP. Thr-12, Thr-13, and Ser-14 together coordinate ATP. Residue Thr-12 coordinates sn-glycerol 3-phosphate. Arg-16 is a binding site for ADP. Sn-glycerol 3-phosphate-binding residues include Arg-82, Glu-83, Tyr-134, and Asp-241. Glycerol-binding residues include Arg-82, Glu-83, Tyr-134, Asp-241, and Gln-242. Residues Thr-263 and Gly-306 each coordinate ADP. Positions 263, 306, 310, and 407 each coordinate ATP. Gly-407 is an ADP binding site.

The protein belongs to the FGGY kinase family.

The enzyme catalyses glycerol + ATP = sn-glycerol 3-phosphate + ADP + H(+). The protein operates within polyol metabolism; glycerol degradation via glycerol kinase pathway; sn-glycerol 3-phosphate from glycerol: step 1/1. With respect to regulation, inhibited by fructose 1,6-bisphosphate (FBP). Key enzyme in the regulation of glycerol uptake and metabolism. Catalyzes the phosphorylation of glycerol to yield sn-glycerol 3-phosphate. This Brachyspira hyodysenteriae (strain ATCC 49526 / WA1) protein is Glycerol kinase.